A 666-amino-acid chain; its full sequence is tRNA 5-methylaminomethyl-2-thiouridine biosynthesis bifunctional protein MnmC (666 aa).

The tract at residues 1-245 (MKQYAIQPAT…KREMLCGVME (245 aa)) is tRNA (mnm(5)s(2)U34)-methyltransferase. An FAD-dependent cmnm(5)s(2)U34 oxidoreductase region spans residues 270-666 (IGGGIASALL…RKLLKGKAVK (397 aa)).

The protein in the N-terminal section; belongs to the methyltransferase superfamily. tRNA (mnm(5)s(2)U34)-methyltransferase family. It in the C-terminal section; belongs to the DAO family. FAD is required as a cofactor.

The protein resides in the cytoplasm. The catalysed reaction is 5-aminomethyl-2-thiouridine(34) in tRNA + S-adenosyl-L-methionine = 5-methylaminomethyl-2-thiouridine(34) in tRNA + S-adenosyl-L-homocysteine + H(+). Its function is as follows. Catalyzes the last two steps in the biosynthesis of 5-methylaminomethyl-2-thiouridine (mnm(5)s(2)U) at the wobble position (U34) in tRNA. Catalyzes the FAD-dependent demodification of cmnm(5)s(2)U34 to nm(5)s(2)U34, followed by the transfer of a methyl group from S-adenosyl-L-methionine to nm(5)s(2)U34, to form mnm(5)s(2)U34. This chain is tRNA 5-methylaminomethyl-2-thiouridine biosynthesis bifunctional protein MnmC, found in Salmonella paratyphi B (strain ATCC BAA-1250 / SPB7).